The sequence spans 292 residues: Arabinose operon regulatory protein (292 aa).

Alpha-L-arabinopyanose is bound by residues Pro-8, Thr-24, Arg-38, Tyr-82, and His-93. In terms of domain architecture, HTH araC/xylS-type spans 180–279 (REACQYISDH…GASPSEFRAG (100 aa)). DNA-binding regions (H-T-H motif) lie at residues 198-219 (ASVAQHVCLSPSRLSHLFRQQL) and 246-269 (IATVGRNVGFDDQLYFSRVFKKCT).

As to quaternary structure, homodimer.

It is found in the cytoplasm. Arabinose converts the repressor form of AraC to the activator form to regulate the araBAD promoter. In the absence of arabinose, AraC binds to the araO2 and araI1 half-sites in the promoter region of the araBAD operon, leading to the formation of a DNA loop that blocks access of RNA polymerase to the promoter. In the presence of arabinose and the cyclic AMP receptor protein (CRP), it binds to the adjacent half-sites araI1 and araI2, leading to the binding of RNA polymerase to the promoter region and transcription of the araBAD operon. AraI1 acts as a switch mechanism allowing both the repressor and the activator forms of AraC protein to regulate the araBAD promoter. Inhibited by D-fucose, which binds competitively to the same site on the protein. Transcription factor that regulates the expression of several genes involved in the transport and metabolism of L-arabinose. Functions both as a positive and a negative regulator. In the presence of arabinose, activates the expression of the araBAD, araE, araFGH and araJ promoters. In the absence of arabinose, negatively regulates the araBAD operon. Represses its own transcription. Acts by binding directly to DNA. The chain is Arabinose operon regulatory protein from Escherichia coli (strain K12).